The sequence spans 409 residues: Probable tRNA N6-adenosine threonylcarbamoyltransferase, mitochondrial (409 aa).

A mitochondrion-targeting transit peptide spans Met-1–Glu-31. A divalent metal cation is bound by residues His-135 and His-139. Residues Leu-159–Gly-163, Asp-192, Gly-212, Glu-216, Asn-322–Asn-323, and Ser-350 each bind substrate. Residue Asp-351 coordinates a divalent metal cation.

The protein belongs to the KAE1 / TsaD family. Homodimer. It depends on a divalent metal cation as a cofactor.

The protein localises to the mitochondrion. It catalyses the reaction L-threonylcarbamoyladenylate + adenosine(37) in tRNA = N(6)-L-threonylcarbamoyladenosine(37) in tRNA + AMP + H(+). Its function is as follows. Required for the formation of a threonylcarbamoyl group on adenosine at position 37 (t(6)A37) in mitochondrial tRNAs that read codons beginning with adenine. Probably involved in the transfer of the threonylcarbamoyl moiety of threonylcarbamoyl-AMP (TC-AMP) to the N6 group of A37. Involved in mitochondrial genome maintenance. The protein is Probable tRNA N6-adenosine threonylcarbamoyltransferase, mitochondrial of Drosophila melanogaster (Fruit fly).